The following is a 397-amino-acid chain: Dual specificity mitogen-activated protein kinase kinase 4 (397 aa).

Positions 1–38 (MAAPSPSGGGGSGGGGGTPGPIGPPASGHPAVSSMQGK) are disordered. Position 2 is an N-acetylalanine (A2). The span at 7–20 (SGGGGSGGGGGTPG) shows a compositional bias: gly residues. Residues 35-50 (MQGKRKALKLNFANPP) are d domain. An Asymmetric dimethylarginine; alternate modification is found at R56. An Omega-N-methylarginine; alternate modification is found at R56. S88 carries the phosphoserine modification. The Protein kinase domain occupies 100 to 366 (LKDLGEIGRG…KELLKHPFIL (267 aa)). ATP contacts are provided by residues 106 to 114 (IGRGAYGSV) and K129. D227 (proton acceptor) is an active-site residue. S255 is modified (phosphoserine). T259 carries the post-translational modification Phosphothreonine. Positions 362 to 385 (HPFILMYEERTVEVACYVCKILDQ) are DVD domain.

It belongs to the protein kinase superfamily. STE Ser/Thr protein kinase family. MAP kinase kinase subfamily. As to quaternary structure, interacts with SPAG9. Interacts (via its D domain) with its substrates MAPK8/JNK1, MAPK9/JNK2, MAPK10/JNK3, MAPK11 and MAPK14. Interacts (via its DVD domain) with MAP3Ks activators like MAP3K1/MEKK1 and MAP3K11/MLK3. Interacts with ARRB1, ARRB2 and MAPK8IP3/JIP3. In terms of processing, activated by phosphorylation on Ser-255 and Thr-259 by MAP kinase kinase kinases (MAP3Ks). As to expression, strong expression is detected in most of the central nervous system and in liver and thymus during early stages of development. While expression in nervous system increases over time, expression in fetal liver and thymus gradually decreases as embryogenesis proceeds. High level of expression in the central nervous system persists throughout postnatal development and remained at a stable level in adult brain.

The protein resides in the cytoplasm. It is found in the nucleus. It carries out the reaction L-seryl-[protein] + ATP = O-phospho-L-seryl-[protein] + ADP + H(+). The catalysed reaction is L-threonyl-[protein] + ATP = O-phospho-L-threonyl-[protein] + ADP + H(+). It catalyses the reaction L-tyrosyl-[protein] + ATP = O-phospho-L-tyrosyl-[protein] + ADP + H(+). Its activity is regulated as follows. Activated in response to a variety of cellular stresses, including UV and gamma-irradiation, heat shock, hyperosmolarity, T-cell receptor stimulation, peroxide and inflammatory cytokines. Also activated by developmental cues. MAP2K4/MKK4 is activated by the majority of MKKKs, such as MAP3K5/ASK1, MAP3K1/MEKK1, MAP3K7/TAK1, MAP3K10/MLK2, MAP3K11/MLK3, MAP3K12/DLK and MAP3K13/LZK. In terms of biological role, dual specificity protein kinase which acts as an essential component of the MAP kinase signal transduction pathway. Essential component of the stress-activated protein kinase/c-Jun N-terminal kinase (SAP/JNK) signaling pathway. With MAP2K7/MKK7, is the one of the only known kinase to directly activate the stress-activated protein kinase/c-Jun N-terminal kinases MAPK8/JNK1, MAPK9/JNK2 and MAPK10/JNK3. MAP2K4/MKK4 and MAP2K7/MKK7 both activate the JNKs by phosphorylation, but they differ in their preference for the phosphorylation site in the Thr-Pro-Tyr motif. MAP2K4 shows preference for phosphorylation of the Tyr residue and MAP2K7/MKK7 for the Thr residue. The phosphorylation of the Thr residue by MAP2K7/MKK7 seems to be the prerequisite for JNK activation at least in response to pro-inflammatory cytokines, while other stimuli activate both MAP2K4/MKK4 and MAP2K7/MKK7 which synergistically phosphorylate JNKs. MAP2K4 is required for maintaining peripheral lymphoid homeostasis. The MKK/JNK signaling pathway is also involved in mitochondrial death signaling pathway, including the release cytochrome c, leading to apoptosis. Whereas MAP2K7/MKK7 exclusively activates JNKs, MAP2K4/MKK4 additionally activates the p38 MAPKs MAPK11, MAPK12, MAPK13 and MAPK14. This Mus musculus (Mouse) protein is Dual specificity mitogen-activated protein kinase kinase 4 (Map2k4).